A 327-amino-acid chain; its full sequence is UPF0065 protein in gbd 5'region (327 aa).

Residues 1-30 (MQRRHFIARAGIAAATAALGLAAMPAQAQA) constitute a signal peptide (tat-type signal).

This sequence belongs to the UPF0065 (bug) family. Predicted to be exported by the Tat system. The position of the signal peptide cleavage has not been experimentally proven.

It is found in the periplasm. This Cupriavidus necator (Alcaligenes eutrophus) protein is UPF0065 protein in gbd 5'region.